A 192-amino-acid chain; its full sequence is PTS-dependent dihydroxyacetone kinase, ADP-binding subunit DhaL (192 aa).

A DhaL domain is found at 5-189; that stretch reads DTTIEWLGKF…SAYLFETLLE (185 aa). Mg(2+) contacts are provided by aspartate 29, aspartate 34, and aspartate 36. ADP is bound by residues 37-40, 78-79, glycine 115, methionine 124, arginine 161, and 174-176; these read HGAN, AS, and DPG.

In terms of assembly, homodimer. The dihydroxyacetone kinase complex is composed of a homodimer of DhaM, a homodimer of DhaK and the subunit DhaL. The cofactor is Mg(2+).

The protein localises to the cytoplasm. The enzyme catalyses dihydroxyacetone + phosphoenolpyruvate = dihydroxyacetone phosphate + pyruvate. It functions in the pathway polyol metabolism; glycerol degradation. Functionally, ADP-binding subunit of the dihydroxyacetone kinase, which is responsible for the phosphoenolpyruvate (PEP)-dependent phosphorylation of dihydroxyacetone. DhaL-ADP is converted to DhaL-ATP via a phosphoryl group transfer from DhaM and transmits it to dihydroxyacetone binds to DhaK. The chain is PTS-dependent dihydroxyacetone kinase, ADP-binding subunit DhaL from Lactococcus lactis subsp. lactis (strain IL1403) (Streptococcus lactis).